A 21-amino-acid polypeptide reads, in one-letter code: Serine protease inhibitor 3 (21 aa).

It belongs to the protease inhibitor I3 (leguminous Kunitz-type inhibitor) family. Tubers.

The protein resides in the vacuole. Inhibits trypsin and chymotrypsin (serine proteases). Does not inhibit elastase, subtilisin, cathepsin L nor papain (serine and cysteine proteases). Protects the plant by inhibiting proteases of invading organisms, decreasing both hyphal growth and zoospores germination of Phytophthora infestans. The polypeptide is Serine protease inhibitor 3 (Solanum tuberosum (Potato)).